The primary structure comprises 483 residues: Regulatory protein ViaA (483 aa).

It belongs to the ViaA family. Homodimer. Interacts with RavA.

Its subcellular location is the cytoplasm. In terms of biological role, component of the RavA-ViaA chaperone complex, which may act on the membrane to optimize the function of some of the respiratory chains. ViaA stimulates the ATPase activity of RavA. The sequence is that of Regulatory protein ViaA from Enterobacter sp. (strain 638).